Here is a 155-residue protein sequence, read N- to C-terminus: Ribosome maturation factor RimP (155 aa).

The protein belongs to the RimP family.

It is found in the cytoplasm. Its function is as follows. Required for maturation of 30S ribosomal subunits. The polypeptide is Ribosome maturation factor RimP (Parabacteroides distasonis (strain ATCC 8503 / DSM 20701 / CIP 104284 / JCM 5825 / NCTC 11152)).